A 311-amino-acid chain; its full sequence is HTH-type transcriptional regulator PcaQ (311 aa).

Residues 6–63 enclose the HTH lysR-type domain; sequence IKFRHLQTFVEVARQKSVIRAAEILHVSQPAVTKTIRELEDVLGVSLLEREGRGIRIS. Positions 23–42 form a DNA-binding region, H-T-H motif; it reads VIRAAEILHVSQPAVTKTIR.

It belongs to the LysR transcriptional regulatory family.

Functionally, activates transcription of the pcaDCHGB operon for the catabolism of the phenolic compound protocatechuate. The sequence is that of HTH-type transcriptional regulator PcaQ (pcaQ) from Agrobacterium fabrum (strain C58 / ATCC 33970) (Agrobacterium tumefaciens (strain C58)).